Consider the following 309-residue polypeptide: Porphobilinogen deaminase (309 aa).

Cysteine 241 is modified (S-(dipyrrolylmethanemethyl)cysteine).

It belongs to the HMBS family. Monomer. Dipyrromethane is required as a cofactor.

It carries out the reaction 4 porphobilinogen + H2O = hydroxymethylbilane + 4 NH4(+). The protein operates within porphyrin-containing compound metabolism; protoporphyrin-IX biosynthesis; coproporphyrinogen-III from 5-aminolevulinate: step 2/4. Tetrapolymerization of the monopyrrole PBG into the hydroxymethylbilane pre-uroporphyrinogen in several discrete steps. In Bacillus anthracis (strain A0248), this protein is Porphobilinogen deaminase.